Reading from the N-terminus, the 511-residue chain is MGQKESQFKVLWQLQTHEEYMKQTSSFLRDFNALERYNLKENFEALSSFDNGEKIWVEDAFTTFFGIPDVIQLSPFFYRSACSFGRDLNINRQRLTFSALARFLASYTGRHKDVWSDFESNLMIIASWCDSFPKFRVEVLKNSKQISRLIHSDVQNISNFFDQNFGIRRSNIYQLCLLLLCISKLKPGESVGCHINSFLDSMFVKEQKAAFYVLQGISPDISSNIIKPSYLLHFLESNPYFLKSLGSLFELALFPHSAHNQKVQDDVSPLNDFAILSPLIHAQICFFLPKSVWQVNGLTSLFRASFHGYSMYALERKMCNYHNPSILLIKAKKINANHKSSSRPISLDATIPRKYPPHCIGTDKAVPQKFGADFHNENILLGAYISTRWRQSHMGFFGDHSTLLFQLQPIHQVYYASNLDKNYCMFDKNVGLGFGLSRHKVTNKVQYDVPGVCMYIDDGLEYGLFRHAGDGAFKPATNYENFEYEERFLIQDLEVIGVDTTKPVEPIHIGL.

Residues 274–499 (AILSPLIHAQ…IQDLEVIGVD (226 aa)) enclose the TLDc domain.

The protein belongs to the RTC5 family.

It localises to the cytoplasm. It is found in the nucleus. Its function is as follows. May be involved in a process influencing telomere capping. This chain is Restriction of telomere capping protein 5 (rtc5), found in Schizosaccharomyces pombe (strain 972 / ATCC 24843) (Fission yeast).